An 845-amino-acid polypeptide reads, in one-letter code: BLOC-2 complex member HPS5 homolog (845 aa).

The tract at residues 239-268 (PTEEDLEDAKSMEGSDDNDNDQRSSPSGVK) is disordered.

This sequence belongs to the HPS5 family.

Its function is as follows. Has a role in the biogenesis of eye pigment granules. Eye pigment granules are specialized forms of late endosomes or lysosomes. Biogenesis of pigment granules in the eye requires molecular components required for protein delivery to lysosomes. The polypeptide is BLOC-2 complex member HPS5 homolog (Aedes aegypti (Yellowfever mosquito)).